The sequence spans 326 residues: tRNA U34 carboxymethyltransferase (326 aa).

Residues Lys91, Trp105, Lys110, Gly130, Met196, Tyr200, and Arg315 each contribute to the carboxy-S-adenosyl-L-methionine site.

The protein belongs to the class I-like SAM-binding methyltransferase superfamily. CmoB family. As to quaternary structure, homotetramer.

The catalysed reaction is carboxy-S-adenosyl-L-methionine + 5-hydroxyuridine(34) in tRNA = 5-carboxymethoxyuridine(34) in tRNA + S-adenosyl-L-homocysteine + H(+). Catalyzes carboxymethyl transfer from carboxy-S-adenosyl-L-methionine (Cx-SAM) to 5-hydroxyuridine (ho5U) to form 5-carboxymethoxyuridine (cmo5U) at position 34 in tRNAs. This Tolumonas auensis (strain DSM 9187 / NBRC 110442 / TA 4) protein is tRNA U34 carboxymethyltransferase.